Reading from the N-terminus, the 354-residue chain is Probable L-ascorbate-6-phosphate lactonase UlaG (354 aa).

Belongs to the UlaG family. A divalent metal cation is required as a cofactor.

Its subcellular location is the cytoplasm. The catalysed reaction is L-ascorbate 6-phosphate + H2O = 3-dehydro-L-gulonate 6-phosphate. Its pathway is cofactor degradation; L-ascorbate degradation; D-xylulose 5-phosphate from L-ascorbate: step 1/4. Probably catalyzes the hydrolysis of L-ascorbate-6-P into 3-keto-L-gulonate-6-P. Is essential for L-ascorbate utilization under anaerobic conditions. This Escherichia coli (strain SMS-3-5 / SECEC) protein is Probable L-ascorbate-6-phosphate lactonase UlaG.